The chain runs to 412 residues: 1-deoxy-D-xylulose 5-phosphate reductoisomerase (412 aa).

NADPH-binding residues include Thr-5, Gly-6, Ser-7, Ile-8, Gly-31, Asn-33, and Asn-125. Residue Lys-126 coordinates 1-deoxy-D-xylulose 5-phosphate. NADPH is bound at residue Glu-127. Asp-151 contributes to the Mn(2+) binding site. 1-deoxy-D-xylulose 5-phosphate contacts are provided by Ser-152, Glu-153, Ser-189, and His-212. Residue Glu-153 participates in Mn(2+) binding. Gly-218 contributes to the NADPH binding site. 1-deoxy-D-xylulose 5-phosphate contacts are provided by Ser-225, Asn-230, Lys-231, and Glu-234. Glu-234 provides a ligand contact to Mn(2+).

Belongs to the DXR family. Mg(2+) serves as cofactor. Requires Mn(2+) as cofactor.

It carries out the reaction 2-C-methyl-D-erythritol 4-phosphate + NADP(+) = 1-deoxy-D-xylulose 5-phosphate + NADPH + H(+). The protein operates within isoprenoid biosynthesis; isopentenyl diphosphate biosynthesis via DXP pathway; isopentenyl diphosphate from 1-deoxy-D-xylulose 5-phosphate: step 1/6. Its function is as follows. Catalyzes the NADPH-dependent rearrangement and reduction of 1-deoxy-D-xylulose-5-phosphate (DXP) to 2-C-methyl-D-erythritol 4-phosphate (MEP). This chain is 1-deoxy-D-xylulose 5-phosphate reductoisomerase, found in Prochlorococcus marinus (strain MIT 9313).